Here is a 188-residue protein sequence, read N- to C-terminus: uncharacterized protein (188 aa).

The first 18 residues, methionine 1 to glycine 18, serve as a signal peptide directing secretion. A lipid anchor (N-palmitoyl cysteine) is attached at cysteine 19. A lipid anchor (S-diacylglycerol cysteine) is attached at cysteine 19.

It localises to the cell membrane. This is an uncharacterized protein from Sinorhizobium fredii (strain NBRC 101917 / NGR234).